The following is a 397-amino-acid chain: Serpin B10 (397 aa).

Positions 74–77 (KKRK) match the Nuclear localization signal motif.

Belongs to the serpin family. Ov-serpin subfamily.

Its subcellular location is the nucleus. The protein resides in the cytoplasm. Functionally, protease inhibitor that may play a role in the regulation of protease activities during hematopoiesis and apoptosis induced by TNF. May regulate protease activities in the cytoplasm and in the nucleus. The polypeptide is Serpin B10 (SERPINB10) (Bos taurus (Bovine)).